We begin with the raw amino-acid sequence, 848 residues long: Adenylate cyclase (848 aa).

The interval 1–535 (MYLYIETLKQ…DVSHHFPLRL (535 aa)) is catalytic. Positions 541–848 (KALYSPCEIR…DTPLLQQYFS (308 aa)) are regulatory. His609 bears the Phosphohistidine; by CRR mark.

Belongs to the adenylyl cyclase class-1 family.

Its subcellular location is the cytoplasm. It catalyses the reaction ATP = 3',5'-cyclic AMP + diphosphate. The polypeptide is Adenylate cyclase (cyaA) (Escherichia coli O157:H7).